Reading from the N-terminus, the 271-residue chain is MGSLFPLSLLFFLAAAYPGVGSALGRRTKRAQSPKGSPLAPSGTSVPFWVRMSPEFVAVQPGKSVQLNCSNSCPQPQNSSLRTPLRQGKTLRGPGWVSYQLLDVRAWSSLAHCLVTCAGKTRWATSRITAYKPPHSVILEPPVLKGRKYTLRCHVTQVFPVGYLVVTLRHGSRVIYSESLERFTGLDLANVTLTYEFAAGPRDFWQPVICHARLNLDGLVVRNSSAPITLMLAWSPAPTALASGSIAALVGILLTVGAAYLCKCLAMKSQA.

Residues 1–22 (MGSLFPLSLLFFLAAAYPGVGS) form the signal peptide. The Extracellular segment spans residues 23-240 (ALGRRTKRAQ…MLAWSPAPTA (218 aa)). Ig-like C2-type domains are found at residues 62-124 (GKSV…TRWA) and 146-217 (GRKY…LNLD). N-linked (GlcNAc...) asparagine glycans are attached at residues Asn68, Asn78, Asn190, and Asn223. Intrachain disulfides connect Cys69–Cys113, Cys69–Cys117, Cys73–Cys117, and Cys153–Cys210. Residues 241-261 (LASGSIAALVGILLTVGAAYL) form a helical membrane-spanning segment. Over 262–271 (CKCLAMKSQA) the chain is Cytoplasmic.

Belongs to the immunoglobulin superfamily. ICAM family. N- and O-glycosylated. As to expression, erythrocytes.

The protein resides in the cell membrane. It is found in the secreted. Its function is as follows. ICAM proteins are ligands for the leukocyte adhesion protein LFA-1 (integrin alpha-L/beta-2). ICAM4 is also a ligand for alpha-4/beta-1 and alpha-V integrins. This chain is Intercellular adhesion molecule 4 (ICAM4), found in Homo sapiens (Human).